The following is a 100-amino-acid chain: Small ribosomal subunit protein bS20 (100 aa).

This sequence belongs to the bacterial ribosomal protein bS20 family.

Its function is as follows. Binds directly to 16S ribosomal RNA. The sequence is that of Small ribosomal subunit protein bS20 from Prochlorococcus marinus (strain MIT 9211).